The chain runs to 342 residues: Putative gluconeogenesis factor (342 aa).

The tract at residues 318-342 (SEPPVAATQEIPIDGGRPRGDDAWR) is disordered. The residue at position 325 (T325) is a Phosphothreonine. The span at 333–342 (GRPRGDDAWR) shows a compositional bias: basic and acidic residues.

This sequence belongs to the gluconeogenesis factor family. Phosphorylated by PknA and/or PknB.

The protein localises to the cytoplasm. In terms of biological role, required for morphogenesis under gluconeogenic growth conditions. In Mycobacterium tuberculosis (strain CDC 1551 / Oshkosh), this protein is Putative gluconeogenesis factor.